We begin with the raw amino-acid sequence, 183 residues long: Dual-action ribosomal maturation protein DarP (183 aa).

This sequence belongs to the DarP family.

Its subcellular location is the cytoplasm. In terms of biological role, member of a network of 50S ribosomal subunit biogenesis factors which assembles along the 30S-50S interface, preventing incorrect 23S rRNA structures from forming. Promotes peptidyl transferase center (PTC) maturation. The chain is Dual-action ribosomal maturation protein DarP from Escherichia coli O81 (strain ED1a).